Here is a 427-residue protein sequence, read N- to C-terminus: Peptidase B (427 aa).

Mn(2+) is bound by residues K195 and D200. K207 is a catalytic residue. Positions 218, 277, and 279 each coordinate Mn(2+). The active site involves R281.

Belongs to the peptidase M17 family. Homohexamer. Requires Mn(2+) as cofactor.

The protein resides in the cytoplasm. It carries out the reaction Release of an N-terminal amino acid, Xaa, from a peptide or arylamide. Xaa is preferably Glu or Asp but may be other amino acids, including Leu, Met, His, Cys and Gln.. Functionally, probably plays an important role in intracellular peptide degradation. The chain is Peptidase B from Escherichia coli (strain SMS-3-5 / SECEC).